Consider the following 565-residue polypeptide: Ubiquitin carboxyl-terminal hydrolase 21 (565 aa).

Basic and acidic residues-rich tracts occupy residues 1-14 (MPQASEHRLGRTRE) and 58-70 (PPDERLKKLDLGR). Residues 1-128 (MPQASEHRLG…LRPMGIALGG (128 aa)) are disordered. Residues 71–81 (GRTSGSRPRGP) show a composition bias toward low complexity. The span at 104–116 (SRTNLTRSKSVSS) shows a compositional bias: polar residues. The Nuclear export signal signature appears at 134 to 152 (ELGAALSRLALRPEPPTLR). The USP domain maps to 212–558 (VGLRNLGNTC…EGYVLFYQLM (347 aa)). Cysteine 221 (nucleophile) is an active-site residue. A disordered region spans residues 324 to 347 (APPILASGPVPSPPRRGGALHEEP). Positions 384, 387, 437, and 440 each coordinate Zn(2+). The active-site Proton acceptor is histidine 518.

The protein belongs to the peptidase C19 family. USP21 subfamily. In terms of assembly, interacts with BEND3.

Its subcellular location is the cytoplasm. It localises to the nucleus. It carries out the reaction Thiol-dependent hydrolysis of ester, thioester, amide, peptide and isopeptide bonds formed by the C-terminal Gly of ubiquitin (a 76-residue protein attached to proteins as an intracellular targeting signal).. In terms of biological role, deubiquitinates histone H2A, a specific tag for epigenetic transcriptional repression, thereby acting as a coactivator. Deubiquitination of histone H2A releaves the repression of di- and trimethylation of histone H3 at 'Lys-4', resulting in regulation of transcriptional initiation. Regulates gene expression via histone H2A deubiquitination. Deubiquitinates BAZ2A/TIP5 leading to its stabilization. Also capable of removing NEDD8 from NEDD8 conjugates but has no effect on Sentrin-1 conjugates. Also acts as a negative regulator of the ribosome quality control (RQC) by mediating deubiquitination of 40S ribosomal proteins RPS10/eS10 and RPS20/uS10, thereby antagonizing ZNF598-mediated 40S ubiquitination. In Rattus norvegicus (Rat), this protein is Ubiquitin carboxyl-terminal hydrolase 21 (Usp21).